The primary structure comprises 215 residues: Cardiolipin synthase (CMP-forming) (215 aa).

5 consecutive transmembrane segments (helical) span residues 29–49 (IPNI…WLIL), 60–80 (GWAL…GKLA), 117–137 (LWLT…VGIL), 158–178 (LMYA…ASLA), and 179–199 (AVFG…AGVL).

The protein belongs to the CDP-alcohol phosphatidyltransferase class-I family. It depends on a divalent metal cation as a cofactor.

The protein localises to the cell membrane. It carries out the reaction a CDP-1,2-diacyl-sn-glycerol + a 1,2-diacyl-sn-glycero-3-phospho-(1'-sn-glycerol) = a cardiolipin + CMP + H(+). Catalyzes the synthesis of cardiolipin (CL) (diphosphatidylglycerol) by specifically transferring a phosphatidyl group from CDP-diacylglycerol to phosphatidylglycerol (PG). This is Cardiolipin synthase (CMP-forming) from Streptomyces coelicolor (strain ATCC BAA-471 / A3(2) / M145).